A 301-amino-acid polypeptide reads, in one-letter code: Troponin T, cardiac muscle (301 aa).

Acidic residues-rich tracts occupy residues 1–42 (MSDL…EEEA) and 50–74 (AETEETQAEEDGQEEEDKEDEDGPV). Disordered regions lie at residues 1–99 (MSDL…GERV) and 125–223 (ENRK…KKKK). Position 2 is an N-acetylserine (S2). Residue S2 is modified to Phosphoserine; by CK2. The segment covering 82 to 93 (RPFMPNLVPPKI) has biased composition (pro residues). Composition is skewed to basic and acidic residues over residues 125 to 186 (ENRK…DEAR) and 206 to 223 (QTERKSGKRQTEREKKKK). T207 bears the Phosphothreonine; by PKC/PRKCA mark. Phosphoserine; by PKC/PRKCA is present on S211. Residue T216 is modified to Phosphothreonine; by PKC/PRKCA and RAF1. The residue at position 297 (T297) is a Phosphothreonine; by PKC/PRKCA.

Belongs to the troponin T family. As to quaternary structure, binds with troponins I and C to make the thin-filament regulatory complex, troponin. In terms of processing, phosphorylation at Thr-216 by PRKCA induces significant reduction in myofilament calcium sensitivity and actomyosin ATPase activity. The major isoform in adult heart is CTNT4.

Troponin T is the tropomyosin-binding subunit of troponin, the thin filament regulatory complex which confers calcium-sensitivity to striated muscle actomyosin ATPase activity. The chain is Troponin T, cardiac muscle (TNNT2) from Oryctolagus cuniculus (Rabbit).